The following is a 210-amino-acid chain: Ribosomal RNA large subunit methyltransferase E (210 aa).

S-adenosyl-L-methionine is bound by residues G64, W66, D84, D100, and D125. The Proton acceptor role is filled by K165.

This sequence belongs to the class I-like SAM-binding methyltransferase superfamily. RNA methyltransferase RlmE family.

Its subcellular location is the cytoplasm. It catalyses the reaction uridine(2552) in 23S rRNA + S-adenosyl-L-methionine = 2'-O-methyluridine(2552) in 23S rRNA + S-adenosyl-L-homocysteine + H(+). Its function is as follows. Specifically methylates the uridine in position 2552 of 23S rRNA at the 2'-O position of the ribose in the fully assembled 50S ribosomal subunit. In Chromohalobacter salexigens (strain ATCC BAA-138 / DSM 3043 / CIP 106854 / NCIMB 13768 / 1H11), this protein is Ribosomal RNA large subunit methyltransferase E.